An 890-amino-acid chain; its full sequence is uncharacterized protein (890 aa).

The N-terminal stretch at 1 to 20 (MKILKSLVLLVLFMAMPAKA) is a signal peptide. 6 helical membrane-spanning segments follow: residues 518 to 538 (AALT…ALKL), 567 to 587 (TYFF…VVGA), 613 to 633 (LLFI…IITI), 651 to 671 (VIAF…IILM), 684 to 704 (ISTL…FLLI), and 775 to 795 (FLVL…SYGL). Residues 860-890 (KARKPEGGEHTNKFLAERNDVPKKEEGERKE) are disordered. Residues 862–890 (RKPEGGEHTNKFLAERNDVPKKEEGERKE) are compositionally biased toward basic and acidic residues.

This sequence belongs to the TrbL/VirB6 family.

The protein localises to the cell membrane. This is an uncharacterized protein from Rickettsia felis (strain ATCC VR-1525 / URRWXCal2) (Rickettsia azadi).